The chain runs to 166 residues: MSEAIIAKKAEQVELIAEKMKAAASIVIVDSRGLTVDQDTVLRRSLRESGVEFKVIKNSILTRAAEKAGLDELKDVFVGPSAVAFSNEDVIAPAKVINDFTKTADALEIKGGAIEGAVSSKEEIQALATLPNREGMLSMLLSVLQAPVRNVAYAVKAVAENKEGAA.

The protein belongs to the universal ribosomal protein uL10 family. As to quaternary structure, part of the ribosomal stalk of the 50S ribosomal subunit. The N-terminus interacts with L11 and the large rRNA to form the base of the stalk. The C-terminus forms an elongated spine to which L12 dimers bind in a sequential fashion forming a multimeric L10(L12)X complex.

Functionally, forms part of the ribosomal stalk, playing a central role in the interaction of the ribosome with GTP-bound translation factors. This Streptococcus pyogenes serotype M1 protein is Large ribosomal subunit protein uL10 (rplJ).